The primary structure comprises 24 residues: Small ribosomal subunit protein uS19 (24 aa).

The tract at residues 1-24 is disordered; the sequence is KLGEFSPTRTYRGHNKKDKKMQKK. The span at 11-24 shows a compositional bias: basic residues; the sequence is YRGHNKKDKKMQKK.

This sequence belongs to the universal ribosomal protein uS19 family.

In terms of biological role, protein S19 forms a complex with S13 that binds strongly to the 16S ribosomal RNA. The protein is Small ribosomal subunit protein uS19 of Phytoplasma sp. (strain STRAWB2).